Consider the following 328-residue polypeptide: Extracellular exo-alpha-(1-&gt;5)-L-arabinofuranosidase (328 aa).

The tat-tyPE signal signal peptide spans 1-43 (MCTREAVRMSREHDLPEIPSRRLLLKGAAAAGALTAVPGVAHA). The active-site Proton acceptor is the D60. E236 (proton donor) is an active-site residue.

It belongs to the glycosyl hydrolase 43 family. In terms of processing, predicted to be exported by the Tat system. The position of the signal peptide cleavage has been experimentally proven.

Its subcellular location is the secreted. The catalysed reaction is Hydrolysis of terminal non-reducing alpha-L-arabinofuranoside residues in alpha-L-arabinosides.. Its pathway is glycan metabolism; L-arabinan degradation. Functionally, involved in the degradation of arabinan and is a key enzyme in the complete degradation of the plant cell wall. Catalyzes only the cleavage of terminal alpha-(1-&gt;5) arabinofuranosyl bonds of arabinan present in the arabinofuranosyl polysaccharides or oligosaccharides. It cannot act on other arabinose-containing polysaccharides and arabinoxylo-oligosaccharides. This Streptomyces chartreusis protein is Extracellular exo-alpha-(1-&gt;5)-L-arabinofuranosidase.